The primary structure comprises 223 residues: Putative germin-like protein subfamily 1 member 12 (223 aa).

The N-terminal stretch at 1–24 is a signal peptide; that stretch reads MNMKNLYLAILYLLAASTLPFAIA. Cys-34 and Cys-51 are joined by a disulfide. One can recognise a Cupin type-1 domain in the interval 65 to 216; that stretch reads SGLDKARTTE…AFQLDPKVII (152 aa). Asn-81 carries N-linked (GlcNAc...) asparagine glycosylation. Residues His-114, His-116, and Glu-121 each coordinate Mn(2+). Asn-145 carries N-linked (GlcNAc...) asparagine glycosylation. His-162 contacts Mn(2+).

It belongs to the germin family. Oligomer (believed to be a pentamer but probably hexamer).

Its subcellular location is the secreted. The protein localises to the extracellular space. The protein resides in the apoplast. Its function is as follows. May play a role in plant defense. Probably has no oxalate oxidase activity even if the active site is conserved. This chain is Putative germin-like protein subfamily 1 member 12, found in Arabidopsis thaliana (Mouse-ear cress).